A 312-amino-acid polypeptide reads, in one-letter code: Tumor necrosis factor receptor type 1-associated DEATH domain protein (312 aa).

Residues 147–163 (LRDEELAELEDALRNLK) carry the Nuclear export signal motif. The disordered stretch occupies residues 170–195 (GGDGEVASAPLQPPVPSLSEVKPPPP). Positions 179–289 (PLQPPVPSLS…ATLQRLVEAL (111 aa)) constitute a Death domain. The segment covering 180–195 (LQPPVPSLSEVKPPPP) has biased composition (pro residues). An interaction with KRT14 and KRT18 region spans residues 222–289 (FARSVGLKWR…ATLQRLVEAL (68 aa)). The short motif at 231 to 244 (RKVGRSLQRGCRAL) is the Nuclear localization signal element. 2 (Microbial infection) N-beta-linked (GlcNAc) arginine glycosylation sites follow: R235 and R245.

Stimulation of TNF-alpha receptor TNFRSF1A leads to the formation of two distinct signaling complexes. Plasma membrane-bound complex I is composed of TNFRSF1A, TRADD, RIPK1, TRAF2 and BIRC2/c-IAP1 or BIRC3 which interacts with CHUCK/IKK-alpha, IKBKB/IKK-beta and IKBKG/IKK-gamma promoting cell survival. Subsequently, TRADD, RIPK1 and TRAF2 dissociate from TNFRSF1A and form cytoplasmic complex II with FADD and caspase CASP8 promoting cell apoptosis. Within complex I, interacts with TNFRSF1A/TNFR1, TRAF2 and kinase RIPK1. Within complex I, interacts with TRPC4AP; the interaction promotes NF-kappa B activation. UXT1 associates with complex I; the interaction prevents the formation of complex II. Within complex I Interacts with scaffold protein DAB2IP. Interacts with autophagy receptor SQSTM1. Interacts with E3 ligase TRIP12. Interacts with kinase HIPK2. Interacts with keratin KRT14. Interacts with keratin KRT18. Interacts with keratins KRT16 and KRT17. Interacts with FADD. Interacts with TOMM70. Interacts with TMC8; the interaction impairs the formation of complex I and facilites complex II formation. (Microbial infection) Glycosylated at Arg-235 by enteropathogenic E.coli protein NleB1, C.rodentium protein NleB and S.typhimurium proteins Ssek1 and Ssek3: arginine GlcNAcylation prevents homotypic/heterotypic death domain interactions and assembly of the oligomeric TNFRSF1A/TNFR1 complex, thereby disrupting TNF signaling. In terms of tissue distribution, found in all examined tissues.

It localises to the nucleus. Its subcellular location is the cytoplasm. The protein localises to the cytoskeleton. Its function is as follows. Adapter molecule for TNFRSF1A/TNFR1 that specifically associates with the cytoplasmic domain of activated TNFRSF1A/TNFR1 mediating its interaction with FADD. Overexpression of TRADD leads to two major TNF-induced responses, apoptosis and activation of NF-kappa-B. The nuclear form acts as a tumor suppressor by preventing ubiquitination and degradation of isoform p19ARF/ARF of CDKN2A by TRIP12: acts by interacting with TRIP12, leading to disrupt interaction between TRIP12 and isoform p19ARF/ARF of CDKN2A. In Homo sapiens (Human), this protein is Tumor necrosis factor receptor type 1-associated DEATH domain protein.